Here is a 168-residue protein sequence, read N- to C-terminus: Disulfide bond formation protein B 2 (168 aa).

Topologically, residues 1–9 (MLPARLRTF) are cytoplasmic. A helical membrane pass occupies residues 10–26 (FLPACLVALAVLVASFR). Topologically, residues 27-44 (LENTVGLMPCPLCLSQRL) are periplasmic. The cysteines at positions 36 and 39 are disulfide-linked. A helical membrane pass occupies residues 45-61 (LLGGYALLCFAAVLQAP). Residues 62 to 67 (GTRGIL) lie on the Cytoplasmic side of the membrane. A helical membrane pass occupies residues 68-85 (RYARLALGCSLAGALLAA). The Periplasmic segment spans residues 86–140 (RHVWLQGAEGVNEVCPVPIGRVFEQSWSEAARQLLLGGPDCRSLAWSFLDLTLPE). The cysteines at positions 100 and 126 are disulfide-linked. The helical transmembrane segment at 141-159 (WSLLAFLLLAVLPLSCLLA) threads the bilayer. Residues 160 to 168 (YRFRTLART) lie on the Cytoplasmic side of the membrane.

The protein belongs to the DsbB family.

It localises to the cell inner membrane. In terms of biological role, required for disulfide bond formation in some periplasmic proteins. Acts by oxidizing the DsbA protein. This chain is Disulfide bond formation protein B 2 (dsbB2), found in Pseudomonas putida (strain ATCC 47054 / DSM 6125 / CFBP 8728 / NCIMB 11950 / KT2440).